The following is a 98-amino-acid chain: Large ribosomal subunit protein uL23 (98 aa).

Belongs to the universal ribosomal protein uL23 family. In terms of assembly, part of the 50S ribosomal subunit. Contacts protein L29, and trigger factor when it is bound to the ribosome.

In terms of biological role, one of the early assembly proteins it binds 23S rRNA. One of the proteins that surrounds the polypeptide exit tunnel on the outside of the ribosome. Forms the main docking site for trigger factor binding to the ribosome. In Ruegeria pomeroyi (strain ATCC 700808 / DSM 15171 / DSS-3) (Silicibacter pomeroyi), this protein is Large ribosomal subunit protein uL23.